The following is a 341-amino-acid chain: Phenylalanine--tRNA ligase alpha subunit (341 aa).

Residue Glu-256 coordinates Mg(2+).

The protein belongs to the class-II aminoacyl-tRNA synthetase family. Phe-tRNA synthetase alpha subunit type 1 subfamily. In terms of assembly, tetramer of two alpha and two beta subunits. Requires Mg(2+) as cofactor.

It is found in the cytoplasm. It carries out the reaction tRNA(Phe) + L-phenylalanine + ATP = L-phenylalanyl-tRNA(Phe) + AMP + diphosphate + H(+). The protein is Phenylalanine--tRNA ligase alpha subunit (pheS) of Chlamydia muridarum (strain MoPn / Nigg).